The chain runs to 187 residues: UPF0340 protein SMU_87 (187 aa).

The protein belongs to the UPF0340 family.

This chain is UPF0340 protein SMU_87, found in Streptococcus mutans serotype c (strain ATCC 700610 / UA159).